A 380-amino-acid polypeptide reads, in one-letter code: MSGAGVAAGTRPPSSPTPGSRRRRQRPSVGVQSLRPQSPQLRQSDPQKRNLDLEKSLQFLQQQHSEMLAKLHEEIEHLKRENKDLRYKLIMNQTSQKKDGPSGNHLSRASAPLGARWVCINGVWVEPGGPSPARLKEGSSRTHRPGGKHGRLAGGSADTVRSPADSLSTSSFQSVKSISNSGKARPQPGSFNKQDSKADVPQKADLEEEPLLHNSKLDKVPGVQGQARKEKAEASNAGAACMGNSQHQGRQMGAAAHPPMILPLPLRKPTTLRQCEVLIRELWNTNLLQTQELQHLKSLLEGSQRPQAVPEEASFPRDQEATHFPKVSTKSLSKKCLLLSPPVAERAILPALKQTPKNNFAERQKRLQAMQKRRLHRSVL.

Disordered regions lie at residues 1 to 51, 89 to 108, and 128 to 202; these read MSGA…KRNL, LIMN…HLSR, and GGPS…DVPQ. Residues 34 to 44 show a composition bias toward polar residues; that stretch reads LRPQSPQLRQS. Residues 47–93 are a coiled coil; the sequence is QKRNLDLEKSLQFLQQQHSEMLAKLHEEIEHLKRENKDLRYKLIMNQ. A compositionally biased stretch (basic residues) spans 141–151; it reads RTHRPGGKHGR. Over residues 165–182 the composition is skewed to polar residues; it reads DSLSTSSFQSVKSISNSG.

The protein is Coiled-coil domain-containing protein 74B (CCDC74B) of Homo sapiens (Human).